The chain runs to 392 residues: Formate-dependent phosphoribosylglycinamide formyltransferase (392 aa).

Residues 20-21 and Glu-80 each bind N(1)-(5-phospho-beta-D-ribosyl)glycinamide; that span reads EL. Residues Arg-112, Lys-153, 158 to 163, 193 to 196, and Glu-201 contribute to the ATP site; these read SSGKGQ and EGFI. The region spanning 117-306 is the ATP-grasp domain; the sequence is RLAAETLALP…EFALHVRAIL (190 aa). Glu-265 and Glu-277 together coordinate Mg(2+). Residues Asp-284, Lys-354, and 361–362 contribute to the N(1)-(5-phospho-beta-D-ribosyl)glycinamide site; that span reads RR.

The protein belongs to the PurK/PurT family. Homodimer.

The catalysed reaction is N(1)-(5-phospho-beta-D-ribosyl)glycinamide + formate + ATP = N(2)-formyl-N(1)-(5-phospho-beta-D-ribosyl)glycinamide + ADP + phosphate + H(+). It functions in the pathway purine metabolism; IMP biosynthesis via de novo pathway; N(2)-formyl-N(1)-(5-phospho-D-ribosyl)glycinamide from N(1)-(5-phospho-D-ribosyl)glycinamide (formate route): step 1/1. Involved in the de novo purine biosynthesis. Catalyzes the transfer of formate to 5-phospho-ribosyl-glycinamide (GAR), producing 5-phospho-ribosyl-N-formylglycinamide (FGAR). Formate is provided by PurU via hydrolysis of 10-formyl-tetrahydrofolate. The polypeptide is Formate-dependent phosphoribosylglycinamide formyltransferase (Shewanella amazonensis (strain ATCC BAA-1098 / SB2B)).